We begin with the raw amino-acid sequence, 95 residues long: Co-chaperonin GroES (95 aa).

This sequence belongs to the GroES chaperonin family. As to quaternary structure, heptamer of 7 subunits arranged in a ring. Interacts with the chaperonin GroEL.

The protein resides in the cytoplasm. Together with the chaperonin GroEL, plays an essential role in assisting protein folding. The GroEL-GroES system forms a nano-cage that allows encapsulation of the non-native substrate proteins and provides a physical environment optimized to promote and accelerate protein folding. GroES binds to the apical surface of the GroEL ring, thereby capping the opening of the GroEL channel. This Rhizorhabdus wittichii (strain DSM 6014 / CCUG 31198 / JCM 15750 / NBRC 105917 / EY 4224 / RW1) (Sphingomonas wittichii) protein is Co-chaperonin GroES.